The following is a 1719-amino-acid chain: Serine/threonine-protein kinase MRCK alpha (1719 aa).

In terms of domain architecture, Protein kinase spans 77–343 (FEILKVIGRG…IEDFKKHPFF (267 aa)). Residues 83 to 91 (IGRGAFGEV) and Lys-106 each bind ATP. Asp-201 acts as the Proton acceptor in catalysis. Phosphoserine; by autocatalysis is present on residues Ser-222 and Ser-234. A Phosphothreonine; by autocatalysis modification is found at Thr-240. The 71-residue stretch at 344 to 414 (SGIDWDNIRN…TSSCVLSDRS (71 aa)) folds into the AGC-kinase C-terminal domain. 3 coiled-coil regions span residues 437 to 670 (NNLA…KQKQ), 713 to 820 (SEIK…WEAQ), and 880 to 943 (LELQ…SEKG). A Phorbol-ester/DAG-type zinc finger spans residues 999–1049 (THQFFVKSFTAPTKCHQCTSLMVGLIRQGCSCEVCGFSCHITCVNKAPTVC). In terms of domain architecture, PH spans 1069–1188 (GTAYEGHVRI…WVGVLSELHK (120 aa)). In terms of domain architecture, CNH spans 1214–1486 (IKTTQAAAII…RPLNTEGSLN (273 aa)). Position 1532 is a phosphoserine (Ser-1532). One can recognise a CRIB domain in the interval 1558–1571 (ISNPTNFNHIAHMG). The segment at 1579–1719 (LKDLPMNPRP…ESTDRGSWDP (141 aa)) is disordered. The segment covering 1591 to 1606 (SRTVFSGSVSIPSITK) has biased composition (polar residues). Ser-1598, Ser-1600, Ser-1616, Ser-1638, Ser-1651, Ser-1656, Ser-1680, Ser-1706, and Ser-1708 each carry phosphoserine. The span at 1612–1627 (GRSMSASSGLSARSSA) shows a compositional bias: low complexity. The segment covering 1652–1661 (PSEGSLSSGG) has biased composition (low complexity).

It belongs to the protein kinase superfamily. AGC Ser/Thr protein kinase family. DMPK subfamily. Homodimer and homotetramer via the coiled coil regions. Interacts tightly with GTP-bound but not GDP-bound CDC42. Forms a tripartite complex with MYO18A and LRP35A with the latter acting as an adapter connecting CDC42BPA and MYO18A. LRP35A binding results in activation of CDC42BPA by abolition of its negative autoregulation. Interacts with LURAP1. Interacts (via AGC-kinase C-terminal domain) with FAM89B/LRAP25 (via LRR repeat). Forms a tripartite complex with FAM89B/LRAP25 and LIMK1. Mg(2+) serves as cofactor. Post-translationally, proteolytically cleaved by caspases upon apoptosis induction. The cleavage at Asp-478 by CASP3 increases its kinase activity (in vitro).

It localises to the cytoplasm. Its subcellular location is the cell projection. The protein resides in the lamellipodium. The enzyme catalyses L-seryl-[protein] + ATP = O-phospho-L-seryl-[protein] + ADP + H(+). It carries out the reaction L-threonyl-[protein] + ATP = O-phospho-L-threonyl-[protein] + ADP + H(+). With respect to regulation, maintained in an inactive, closed conformation by an interaction between the kinase domain and the negative autoregulatory C-terminal coiled-coil region. Agonist binding to the phorbol ester binding site disrupts this, releasing the kinase domain to allow N-terminus-mediated dimerization and kinase activation by transautophosphorylation. Inhibited by chelerythrine chloride. Its function is as follows. Serine/threonine-protein kinase which is an important downstream effector of CDC42 and plays a role in the regulation of cytoskeleton reorganization and cell migration. Regulates actin cytoskeletal reorganization via phosphorylation of PPP1R12C and MYL9/MLC2. In concert with MYO18A and LRP35A, is involved in modulating lamellar actomyosin retrograde flow that is crucial to cell protrusion and migration. Phosphorylates: PPP1R12A and LIMK2. May play a role in TFRC-mediated iron uptake. In concert with FAM89B/LRAP25 mediates the targeting of LIMK1 to the lamellipodium resulting in its activation and subsequent phosphorylation of CFL1 which is important for lamellipodial F-actin regulation. Triggers the formation of an extrusion apical actin ring required for epithelial extrusion of apoptotic cells. This chain is Serine/threonine-protein kinase MRCK alpha (Cdc42bpa), found in Mus musculus (Mouse).